A 123-amino-acid chain; its full sequence is UPF0102 protein MCA0184 (123 aa).

Belongs to the UPF0102 family.

The polypeptide is UPF0102 protein MCA0184 (Methylococcus capsulatus (strain ATCC 33009 / NCIMB 11132 / Bath)).